Reading from the N-terminus, the 331-residue chain is Nucleotide sugar transporter SLC35B4 (331 aa).

The next 11 helical transmembrane spans lie at 4-24 (AFAVGLVFAGCCSNVIFLELL), 30-50 (GCGNIVTFAQFLFIAVEGFLF), 59-79 (PAIPIRYYAIMVTMFFTVSVV), 92-112 (LHMIFRSGSLIANMILGIIIL), 124-144 (IALVSAGIFICTFMSAKQVTV), 153-173 (GFQAFAWWLLGIAALTFALLM), 201-221 (ALPLPGFIFLASDIYDHVVLF), 229-249 (VPVIGVTMPVMWFYLLMNVVT), 251-267 (YVCIRGVFILTTECTSL), 268-288 (TVTLVVTLRKFVSLIFSILYF), and 294-314 (MWHWLGTSFVFIGTLMYTEVW). The Mediates endoplasmic reticulum retention motif lies at 326-331 (KDDKKD).

It belongs to the nucleotide-sugar transporter family. SLC35B subfamily.

The protein resides in the endoplasmic reticulum membrane. The enzyme catalyses UDP-N-acetyl-alpha-D-glucosamine(in) + UDP-alpha-D-glucuronate(out) = UDP-N-acetyl-alpha-D-glucosamine(out) + UDP-alpha-D-glucuronate(in). The catalysed reaction is UDP-alpha-D-xylose(in) + UDP-alpha-D-glucuronate(out) = UDP-alpha-D-xylose(out) + UDP-alpha-D-glucuronate(in). Functionally, antiporter that transports nucleotide sugars across the endoplasmic reticulum (ER) membrane in exchange for another nucleotide sugar. May couple UDP-alpha-D-glucuronate (UDP-GlcA) or UDP-alpha-D-xylose (UDP-Xyl) efflux to UDP-alpha-D-glucuronate (UDP-GlcA) influx into the ER lumen, which in turn stimulates glucuronidation and excretion of endobiotics and xenobiotics. The polypeptide is Nucleotide sugar transporter SLC35B4 (Slc35b4) (Mus musculus (Mouse)).